Here is a 327-residue protein sequence, read N- to C-terminus: Ferrochelatase (327 aa).

The Fe cation site is built by histidine 187 and glutamate 265.

It belongs to the ferrochelatase family.

Its subcellular location is the cytoplasm. It catalyses the reaction heme b + 2 H(+) = protoporphyrin IX + Fe(2+). It participates in porphyrin-containing compound metabolism; protoheme biosynthesis; protoheme from protoporphyrin-IX: step 1/1. Its function is as follows. Catalyzes the ferrous insertion into protoporphyrin IX. The protein is Ferrochelatase of Chlamydia pneumoniae (Chlamydophila pneumoniae).